The chain runs to 94 residues: Cell division topological specificity factor (94 aa).

This sequence belongs to the MinE family.

Prevents the cell division inhibition by proteins MinC and MinD at internal division sites while permitting inhibition at polar sites. This ensures cell division at the proper site by restricting the formation of a division septum at the midpoint of the long axis of the cell. The chain is Cell division topological specificity factor from Alkaliphilus metalliredigens (strain QYMF).